The chain runs to 194 residues: Molybdenum cofactor guanylyltransferase (194 aa).

GTP contacts are provided by residues 12–14, K25, D71, and D101; that span reads LAG. D101 provides a ligand contact to Mg(2+).

The protein belongs to the MobA family. In terms of assembly, monomer. Requires Mg(2+) as cofactor.

The protein localises to the cytoplasm. The catalysed reaction is Mo-molybdopterin + GTP + H(+) = Mo-molybdopterin guanine dinucleotide + diphosphate. Transfers a GMP moiety from GTP to Mo-molybdopterin (Mo-MPT) cofactor (Moco or molybdenum cofactor) to form Mo-molybdopterin guanine dinucleotide (Mo-MGD) cofactor. The polypeptide is Molybdenum cofactor guanylyltransferase (Salmonella typhimurium (strain LT2 / SGSC1412 / ATCC 700720)).